The chain runs to 319 residues: Acetyl esterase (319 aa).

Positions 91-93 match the Involved in the stabilization of the negatively charged intermediate by the formation of the oxyanion hole motif; it reads HGG. Residues S165, D262, and H292 contribute to the active site.

This sequence belongs to the 'GDXG' lipolytic enzyme family. As to quaternary structure, homodimer. Interacts with MalT and MelA.

The protein localises to the cytoplasm. Displays esterase activity towards short chain fatty esters (acyl chain length of up to 8 carbons). Able to hydrolyze triacetylglycerol (triacetin) and tributyrylglycerol (tributyrin), but not trioleylglycerol (triolein) or cholesterol oleate. Negatively regulates MalT activity by antagonizing maltotriose binding. Inhibits MelA galactosidase activity. This Escherichia coli (strain ATCC 8739 / DSM 1576 / NBRC 3972 / NCIMB 8545 / WDCM 00012 / Crooks) protein is Acetyl esterase.